A 1002-amino-acid chain; its full sequence is SIT4-associating protein SAP155 (1002 aa).

Disordered stretches follow at residues 51–131, 214–273, 609–645, 868–901, and 940–1002; these read GTSD…APMM, QQQL…ANED, EQLK…ESDY, DNTT…GGGQ, and NTEN…YDHE. S58 is modified (phosphoserine). Residues 62-97 show a composition bias toward basic and acidic residues; sequence EYSHGDEVKTARGDQKSRFEKDDQQERYEKEEEERS. The span at 98–114 shows a compositional bias: low complexity; sequence MNSSESSTTSFSSGSTS. A compositionally biased stretch (acidic residues) spans 220-241; that stretch reads SSQEDVYVESDTEQEEEKEDDN. Phosphoserine is present on S255. The segment covering 262–273 has biased composition (acidic residues); it reads NNNDDDDDANED. Residues 609–626 show a composition bias toward basic and acidic residues; that stretch reads EQLKTKHSPTRDTDHDLK. Phosphothreonine is present on residues T613 and T618. Positions 635–645 are enriched in acidic residues; it reads DNNDNDDESDY. Residues 868–885 are compositionally biased toward polar residues; that stretch reads DNTTVLTPNGDASNNNEI. The span at 956–976 shows a compositional bias: low complexity; that stretch reads SNSNINNTNHNSNNSNNNDNN. Acidic residues predominate over residues 991–1002; sequence EDADNDNDYDHE.

Belongs to the SAPS family. Associates with the SIT4 protein phosphatase catalytic subunit in a cell-cycle-dependent manner. Hyperphosphorylated in the absence of SIT4.

The protein localises to the cytoplasm. Positive regulator of protein phosphatase SIT4. Involved in directing expression of TOR-repressed genes and in dephosphorylation of NPR1 in response to nutrient starvation. Negatively modulates K(+) efflux of the cell by the Na(+)-K(+)/H(+) antiporter NHA1. The chain is SIT4-associating protein SAP155 (SAP155) from Saccharomyces cerevisiae (strain ATCC 204508 / S288c) (Baker's yeast).